A 642-amino-acid polypeptide reads, in one-letter code: Threonine--tRNA ligase (642 aa).

The region spanning 1–61 (MPVITLPDGS…DADATVAIIT (61 aa)) is the TGS domain. Residues 243–534 (DHRKIGKQLD…LTEEFAGFFP (292 aa)) are catalytic. The Zn(2+) site is built by Cys334, His385, and His511.

The protein belongs to the class-II aminoacyl-tRNA synthetase family. As to quaternary structure, homodimer. Zn(2+) serves as cofactor.

The protein localises to the cytoplasm. It carries out the reaction tRNA(Thr) + L-threonine + ATP = L-threonyl-tRNA(Thr) + AMP + diphosphate + H(+). Functionally, catalyzes the attachment of threonine to tRNA(Thr) in a two-step reaction: L-threonine is first activated by ATP to form Thr-AMP and then transferred to the acceptor end of tRNA(Thr). Also edits incorrectly charged L-seryl-tRNA(Thr). In Edwardsiella ictaluri (strain 93-146), this protein is Threonine--tRNA ligase.